A 333-amino-acid chain; its full sequence is Phosphate acyltransferase (333 aa).

This sequence belongs to the PlsX family. Homodimer. Probably interacts with PlsY.

It is found in the cytoplasm. It catalyses the reaction a fatty acyl-[ACP] + phosphate = an acyl phosphate + holo-[ACP]. It participates in lipid metabolism; phospholipid metabolism. Its function is as follows. Catalyzes the reversible formation of acyl-phosphate (acyl-PO(4)) from acyl-[acyl-carrier-protein] (acyl-ACP). This enzyme utilizes acyl-ACP as fatty acyl donor, but not acyl-CoA. This chain is Phosphate acyltransferase, found in Lactobacillus gasseri (strain ATCC 33323 / DSM 20243 / BCRC 14619 / CIP 102991 / JCM 1131 / KCTC 3163 / NCIMB 11718 / NCTC 13722 / AM63).